Here is a 225-residue protein sequence, read N- to C-terminus: Membrane protein (225 aa).

The Virion surface portion of the chain corresponds to 1–20 (MSNETNCTLDFEQSVELFKE). A helical transmembrane segment spans residues 21–41 (YNLFITAFLLFLTIILQYGYA). Topologically, residues 42–51 (TRSKFIYILK) are intravirion. The chain crosses the membrane as a helical span at residues 52-72 (MIVLWCFWPLNIAVGVISCIY). Over 73 to 77 (PPNTG) the chain is Virion surface. The chain crosses the membrane as a helical span at residues 78-98 (GLVAAIILTVFACLSFVGYWI). Residues 99–225 (QSIRLFKRCR…VATGGSSLYT (127 aa)) lie on the Intravirion side of the membrane.

It belongs to the gammacoronaviruses M protein family. In terms of assembly, homomultimer. Interacts with envelope E protein in the budding compartment of the host cell, which is located between endoplasmic reticulum and the Golgi complex. Forms a complex with HE and S proteins. Interacts with nucleocapsid N protein. This interaction probably participates in RNA packaging into the virus.

It is found in the virion membrane. It localises to the host Golgi apparatus membrane. Functionally, component of the viral envelope that plays a central role in virus morphogenesis and assembly via its interactions with other viral proteins. This chain is Membrane protein, found in Gallus gallus (Chicken).